Consider the following 28-residue polypeptide: Potassium channel toxin alpha-KTx 9.7 (28 aa).

Disulfide bonds link cysteine 3–cysteine 19, cysteine 6–cysteine 24, and cysteine 10–cysteine 26.

In terms of tissue distribution, expressed by the venom gland.

The protein resides in the secreted. Calcium channel activator. Rapidly and reversibly activates ryanodine receptor 1 (RYR1). The protein is Potassium channel toxin alpha-KTx 9.7 of Hottentotta judaicus (Black scorpion).